The primary structure comprises 431 residues: Glutamyl-tRNA(Gln) amidotransferase subunit A (431 aa).

Residues Lys55 and Ser130 each act as charge relay system in the active site. The Acyl-ester intermediate role is filled by Ser154.

This sequence belongs to the amidase family. GatA subfamily. As to quaternary structure, heterotrimer of A, B and C subunits.

The catalysed reaction is L-glutamyl-tRNA(Gln) + L-glutamine + ATP + H2O = L-glutaminyl-tRNA(Gln) + L-glutamate + ADP + phosphate + H(+). Allows the formation of correctly charged Gln-tRNA(Gln) through the transamidation of misacylated Glu-tRNA(Gln) in organisms which lack glutaminyl-tRNA synthetase. The reaction takes place in the presence of glutamine and ATP through an activated gamma-phospho-Glu-tRNA(Gln). This Methanococcus maripaludis (strain C7 / ATCC BAA-1331) protein is Glutamyl-tRNA(Gln) amidotransferase subunit A.